Reading from the N-terminus, the 265-residue chain is Tryptophan synthase alpha chain (265 aa).

Active-site proton acceptor residues include glutamate 49 and aspartate 60.

This sequence belongs to the TrpA family. As to quaternary structure, tetramer of two alpha and two beta chains.

The catalysed reaction is (1S,2R)-1-C-(indol-3-yl)glycerol 3-phosphate + L-serine = D-glyceraldehyde 3-phosphate + L-tryptophan + H2O. It participates in amino-acid biosynthesis; L-tryptophan biosynthesis; L-tryptophan from chorismate: step 5/5. Functionally, the alpha subunit is responsible for the aldol cleavage of indoleglycerol phosphate to indole and glyceraldehyde 3-phosphate. The sequence is that of Tryptophan synthase alpha chain from Cupriavidus taiwanensis (strain DSM 17343 / BCRC 17206 / CCUG 44338 / CIP 107171 / LMG 19424 / R1) (Ralstonia taiwanensis (strain LMG 19424)).